Consider the following 153-residue polypeptide: UPF0158 protein PA5073 (153 aa).

The protein belongs to the UPF0158 family.

This is UPF0158 protein PA5073 from Pseudomonas aeruginosa (strain ATCC 15692 / DSM 22644 / CIP 104116 / JCM 14847 / LMG 12228 / 1C / PRS 101 / PAO1).